The sequence spans 165 residues: MASYFDEHDCEPLNPEREARNNMLLELARRVRGAWSWAPGGRSLFNRMDFEDLGLVDWEHHLPPPAAKAVVESLPRTVISSAKADLKCPVCLLEFEAEETVIEMPCHHLFHSNCILPWLSKTNSCPLCRHELPTDDDSYEEHKKDKARRQQQQHRLENLHGAMYT.

Residues 88 to 129 (CPVCLLEFEAEETVIEMPCHHLFHSNCILPWLSKTNSCPLCR) form an RING-type; atypical zinc finger. The tract at residues 136-165 (DDSYEEHKKDKARRQQQQHRLENLHGAMYT) is disordered. At Thr-165 the chain carries Phosphothreonine.

Belongs to the RNF181 family. As to quaternary structure, directly interacts with ITGA2B and, as a result, with integrin ITGA2B/ITGB3. There is no evidence that integrin ITGA2B/ITGB3 is an endogenous substrate for RNF181-directed ubiquitination. In terms of processing, auto-ubiquitinated as part of the enzymatic reaction.

The enzyme catalyses S-ubiquitinyl-[E2 ubiquitin-conjugating enzyme]-L-cysteine + [acceptor protein]-L-lysine = [E2 ubiquitin-conjugating enzyme]-L-cysteine + N(6)-ubiquitinyl-[acceptor protein]-L-lysine.. It functions in the pathway protein modification; protein ubiquitination. In terms of biological role, E3 ubiquitin-protein ligase which accepts ubiquitin from an E2 ubiquitin-conjugating enzyme in the form of a thioester and then directly transfers the ubiquitin to targeted substrates. Catalyzes monoubiquitination of 26S proteasome subunit PSMC2/RPT1. This chain is E3 ubiquitin-protein ligase RNF181, found in Mus musculus (Mouse).